Reading from the N-terminus, the 62-residue chain is Conotoxin Tx5.1 (62 aa).

The N-terminal stretch at 1-22 is a signal peptide; sequence MCCLPVFVILLLLIASAPSVDA. Residues 23–49 constitute a propeptide that is removed on maturation; that stretch reads QPKTKDDVPLAPLHDNAKSALQHLNQR. At glutamine 60 the chain carries Glutamine amide.

Belongs to the conotoxin T superfamily. Post-translationally, contains 2 disulfide bonds that can be either 'C1-C3, C2-C4' or 'C1-C4, C2-C3', since these disulfide connectivities have been observed for conotoxins with cysteine framework V (for examples, see AC P0DQQ7 and AC P81755). As to expression, expressed by the venom duct.

The protein localises to the secreted. The chain is Conotoxin Tx5.1 from Conus textile (Cloth-of-gold cone).